Consider the following 164-residue polypeptide: MGMNHQQEKTPFLIAPLEKLVNWARSNSLWPAQFGLACCAIEMMSTAASRYDLARFGMEVFRASPRQSDVMIVAGRVSQKMAPVLQTIYEQMLEPKWVIAMGDCASCGGVYNNYAIIQGVDKLVPVDVYLAGCPPRPEALIDALIMLQNKIKYGDSSKKGKRHL.

Residues Cys38, Cys39, Cys104, and Cys133 each contribute to the [4Fe-4S] cluster site.

Belongs to the complex I 20 kDa subunit family. In terms of assembly, NDH-1 is composed of 14 different subunits. Subunits NuoB, C, D, E, F, and G constitute the peripheral sector of the complex. [4Fe-4S] cluster serves as cofactor.

The protein localises to the cell inner membrane. It carries out the reaction a quinone + NADH + 5 H(+)(in) = a quinol + NAD(+) + 4 H(+)(out). In terms of biological role, NDH-1 shuttles electrons from NADH, via FMN and iron-sulfur (Fe-S) centers, to quinones in the respiratory chain. The immediate electron acceptor for the enzyme in this species is believed to be ubiquinone. Couples the redox reaction to proton translocation (for every two electrons transferred, four hydrogen ions are translocated across the cytoplasmic membrane), and thus conserves the redox energy in a proton gradient. The polypeptide is NADH-quinone oxidoreductase subunit B (Protochlamydia amoebophila (strain UWE25)).